Reading from the N-terminus, the 428-residue chain is GTPase Obg (428 aa).

Residues methionine 1–leucine 158 enclose the Obg domain. Residues alanine 159 to glutamate 329 form the OBG-type G domain. Residues glycine 165 to serine 172, phenylalanine 190 to threonine 194, aspartate 212 to glycine 215, asparagine 282 to aspartate 285, and serine 310 to isoleucine 312 each bind GTP. Residues serine 172 and threonine 192 each contribute to the Mg(2+) site. The region spanning lysine 350–glutamate 428 is the OCT domain.

Belongs to the TRAFAC class OBG-HflX-like GTPase superfamily. OBG GTPase family. As to quaternary structure, monomer. Mg(2+) serves as cofactor.

It is found in the cytoplasm. Its function is as follows. An essential GTPase which binds GTP, GDP and possibly (p)ppGpp with moderate affinity, with high nucleotide exchange rates and a fairly low GTP hydrolysis rate. Plays a role in control of the cell cycle, stress response, ribosome biogenesis and in those bacteria that undergo differentiation, in morphogenesis control. The polypeptide is GTPase Obg (Shouchella clausii (strain KSM-K16) (Alkalihalobacillus clausii)).